The chain runs to 150 residues: MRAVVQRALGARVEVGGQVVGAIERGLVAFVGAAKDDDDADADHVASKIAGLRVFSDDAGKMSRALADVRGGGVLAISQFTLFGDVRRGLRPSFDGAMEPVRAEALYDRFVAALRARGLTVATGRFRADMRVFVENDGPVTILIDSKRTF.

Residues 138-139 carry the Gly-cisPro motif, important for rejection of L-amino acids motif; that stretch reads GP.

It belongs to the DTD family. As to quaternary structure, homodimer.

The protein localises to the cytoplasm. The catalysed reaction is glycyl-tRNA(Ala) + H2O = tRNA(Ala) + glycine + H(+). It catalyses the reaction a D-aminoacyl-tRNA + H2O = a tRNA + a D-alpha-amino acid + H(+). Its function is as follows. An aminoacyl-tRNA editing enzyme that deacylates mischarged D-aminoacyl-tRNAs. Also deacylates mischarged glycyl-tRNA(Ala), protecting cells against glycine mischarging by AlaRS. Acts via tRNA-based rather than protein-based catalysis; rejects L-amino acids rather than detecting D-amino acids in the active site. By recycling D-aminoacyl-tRNA to D-amino acids and free tRNA molecules, this enzyme counteracts the toxicity associated with the formation of D-aminoacyl-tRNA entities in vivo and helps enforce protein L-homochirality. This chain is D-aminoacyl-tRNA deacylase, found in Sorangium cellulosum (strain So ce56) (Polyangium cellulosum (strain So ce56)).